The chain runs to 518 residues: 3-octaprenyl-4-hydroxybenzoate carboxy-lyase (518 aa).

Asparagine 177 serves as a coordination point for Mn(2+). Residues 180-182, 194-196, and 199-200 contribute to the prenylated FMN site; these read IYR, RWL, and RG. Glutamate 243 is a Mn(2+) binding site. The active-site Proton donor is aspartate 318.

This sequence belongs to the UbiD family. Homohexamer. It depends on prenylated FMN as a cofactor. Mn(2+) is required as a cofactor.

It is found in the cell membrane. It catalyses the reaction a 4-hydroxy-3-(all-trans-polyprenyl)benzoate + H(+) = a 2-(all-trans-polyprenyl)phenol + CO2. Its pathway is cofactor biosynthesis; ubiquinone biosynthesis. Functionally, catalyzes the decarboxylation of 3-octaprenyl-4-hydroxy benzoate to 2-octaprenylphenol, an intermediate step in ubiquinone biosynthesis. This is 3-octaprenyl-4-hydroxybenzoate carboxy-lyase from Burkholderia multivorans (strain ATCC 17616 / 249).